The primary structure comprises 164 residues: UPF0304 protein YfbU (164 aa).

Belongs to the UPF0304 family.

This is UPF0304 protein YfbU from Salmonella enteritidis PT4 (strain P125109).